The sequence spans 459 residues: MSNRFAVILAAGKGTRMKSKLYKVLHPVCGKPMVQHVVDQVSQLGLQKLVTVVGHGAEMVQEQLGNVSEFALQAEQLGTAHAVDQAASVLANEEGTTLVICGDTPLITAETMEALLQQHKEAGAMATVLTAYIEEPAGYGRIVRNENGHVEKIVEHKDANEKELAIKEINTGTYCFDNKALFASLSKVSNDNVQGEYYLPDVIEILKNEGHIVSAYQTEHFDETLGVNDRVALSQAEIIMKNRINRKNMVNGVTIIDPSNTYISADAIIGSDTVLHPGTIIEGNTVIGSDCEIGPHTVIRDSEIGDRTTIRQSTVHDSKLGTEVSVGPFAHIRPDSVIGDEVRVGNFVEIKKTVFGNRSKASHLSYIGDAQVGEDVNLGCGSITVNYDGKNKFKTVIGNGVFIGCNSNLVAPVTVEDGAYVAAGSTITENVPSKALSVARARQVNKEDYVDQLLNKKKS.

Residues 1-230 (MSNRFAVILA…FDETLGVNDR (230 aa)) are pyrophosphorylase. UDP-N-acetyl-alpha-D-glucosamine contacts are provided by residues 9–12 (LAAG), Lys-23, Gln-73, and 78–79 (GT). Position 103 (Asp-103) interacts with Mg(2+). The UDP-N-acetyl-alpha-D-glucosamine site is built by Gly-140, Glu-155, Asn-170, and Asn-228. A Mg(2+)-binding site is contributed by Asn-228. The tract at residues 231-251 (VALSQAEIIMKNRINRKNMVN) is linker. An N-acetyltransferase region spans residues 252–459 (GVTIIDPSNT…VDQLLNKKKS (208 aa)). The UDP-N-acetyl-alpha-D-glucosamine site is built by Arg-333 and Lys-351. The Proton acceptor role is filled by His-363. UDP-N-acetyl-alpha-D-glucosamine contacts are provided by Tyr-366 and Asn-377. Residues 386 to 387 (NY), Ala-423, and Arg-440 contribute to the acetyl-CoA site.

This sequence in the N-terminal section; belongs to the N-acetylglucosamine-1-phosphate uridyltransferase family. In the C-terminal section; belongs to the transferase hexapeptide repeat family. As to quaternary structure, homotrimer. Mg(2+) is required as a cofactor.

Its subcellular location is the cytoplasm. The enzyme catalyses alpha-D-glucosamine 1-phosphate + acetyl-CoA = N-acetyl-alpha-D-glucosamine 1-phosphate + CoA + H(+). The catalysed reaction is N-acetyl-alpha-D-glucosamine 1-phosphate + UTP + H(+) = UDP-N-acetyl-alpha-D-glucosamine + diphosphate. Its pathway is nucleotide-sugar biosynthesis; UDP-N-acetyl-alpha-D-glucosamine biosynthesis; N-acetyl-alpha-D-glucosamine 1-phosphate from alpha-D-glucosamine 6-phosphate (route II): step 2/2. It functions in the pathway nucleotide-sugar biosynthesis; UDP-N-acetyl-alpha-D-glucosamine biosynthesis; UDP-N-acetyl-alpha-D-glucosamine from N-acetyl-alpha-D-glucosamine 1-phosphate: step 1/1. The protein operates within bacterial outer membrane biogenesis; LPS lipid A biosynthesis. In terms of biological role, catalyzes the last two sequential reactions in the de novo biosynthetic pathway for UDP-N-acetylglucosamine (UDP-GlcNAc). The C-terminal domain catalyzes the transfer of acetyl group from acetyl coenzyme A to glucosamine-1-phosphate (GlcN-1-P) to produce N-acetylglucosamine-1-phosphate (GlcNAc-1-P), which is converted into UDP-GlcNAc by the transfer of uridine 5-monophosphate (from uridine 5-triphosphate), a reaction catalyzed by the N-terminal domain. This is Bifunctional protein GlmU from Bacillus cereus (strain AH187).